Here is a 638-residue protein sequence, read N- to C-terminus: 3D-(3,5/4)-trihydroxycyclohexane-1,2-dione hydrolase (638 aa).

A thiamine diphosphate-binding site is contributed by glutamate 67. A thiamine pyrophosphate binding region spans residues 442 to 523 (SLPGDLQRLW…INIMLFDNSG (82 aa)). Mg(2+) is bound by residues aspartate 494 and asparagine 521.

It belongs to the TPP enzyme family. Mg(2+) serves as cofactor. Requires thiamine diphosphate as cofactor.

The enzyme catalyses 3D-3,5/4-trihydroxycyclohexane-1,2-dione + H2O = 5-deoxy-D-glucuronate + H(+). It functions in the pathway polyol metabolism; myo-inositol degradation into acetyl-CoA; acetyl-CoA from myo-inositol: step 3/7. In terms of biological role, involved in the cleavage of the C1-C2 bond of 3D-(3,5/4)-trihydroxycyclohexane-1,2-dione (THcHDO) to yield 5-deoxy-glucuronate (5DG). In Listeria innocua serovar 6a (strain ATCC BAA-680 / CLIP 11262), this protein is 3D-(3,5/4)-trihydroxycyclohexane-1,2-dione hydrolase.